Consider the following 229-residue polypeptide: N-(5'-phosphoribosyl)anthranilate isomerase (229 aa).

It belongs to the TrpF family.

It carries out the reaction N-(5-phospho-beta-D-ribosyl)anthranilate = 1-(2-carboxyphenylamino)-1-deoxy-D-ribulose 5-phosphate. Its pathway is amino-acid biosynthesis; L-tryptophan biosynthesis; L-tryptophan from chorismate: step 3/5. In Clostridium beijerinckii (strain ATCC 51743 / NCIMB 8052) (Clostridium acetobutylicum), this protein is N-(5'-phosphoribosyl)anthranilate isomerase.